The chain runs to 662 residues: DNA ligase (662 aa).

Residues 32 to 36 (DAEYD), 75 to 76 (SL), and Glu-106 contribute to the NAD(+) site. Catalysis depends on Lys-108, which acts as the N6-AMP-lysine intermediate. NAD(+)-binding residues include Arg-129, Glu-164, Lys-271, and Lys-295. Residues Cys-389, Cys-392, Cys-407, and Cys-413 each coordinate Zn(2+). In terms of domain architecture, BRCT spans 580 to 662 (SSNSVLNNKI…HKVISLGVFK (83 aa)).

It belongs to the NAD-dependent DNA ligase family. LigA subfamily. Mg(2+) is required as a cofactor. The cofactor is Mn(2+).

The catalysed reaction is NAD(+) + (deoxyribonucleotide)n-3'-hydroxyl + 5'-phospho-(deoxyribonucleotide)m = (deoxyribonucleotide)n+m + AMP + beta-nicotinamide D-nucleotide.. DNA ligase that catalyzes the formation of phosphodiester linkages between 5'-phosphoryl and 3'-hydroxyl groups in double-stranded DNA using NAD as a coenzyme and as the energy source for the reaction. It is essential for DNA replication and repair of damaged DNA. The polypeptide is DNA ligase (Wolbachia pipientis wMel).